The chain runs to 97 residues: Co-chaperonin GroES (97 aa).

Belongs to the GroES chaperonin family. In terms of assembly, heptamer of 7 subunits arranged in a ring. Interacts with the chaperonin GroEL.

It is found in the cytoplasm. In terms of biological role, together with the chaperonin GroEL, plays an essential role in assisting protein folding. The GroEL-GroES system forms a nano-cage that allows encapsulation of the non-native substrate proteins and provides a physical environment optimized to promote and accelerate protein folding. GroES binds to the apical surface of the GroEL ring, thereby capping the opening of the GroEL channel. This is Co-chaperonin GroES from Gemmatimonas aurantiaca (strain DSM 14586 / JCM 11422 / NBRC 100505 / T-27).